Here is a 126-residue protein sequence, read N- to C-terminus: MIRRGTYLNTADNSGAKKVQCIGIPKKVNFGKQTDFATLGDVITVTVKDALPNGAAKKGKVYKAVVVRTAKEVSREDGSYIKFDDNAVVLLNNNLEPIGTRILGPVAREIRAKGFYRIVSLAPEVI.

The protein belongs to the universal ribosomal protein uL14 family. In terms of assembly, part of the 50S ribosomal subunit. Forms a cluster with proteins L3 and L19. In the 70S ribosome, L14 and L19 interact and together make contacts with the 16S rRNA in bridges B5 and B8.

Its function is as follows. Binds to 23S rRNA. Forms part of two intersubunit bridges in the 70S ribosome. In Persephonella marina (strain DSM 14350 / EX-H1), this protein is Large ribosomal subunit protein uL14.